The following is a 195-amino-acid chain: Imidazoleglycerol-phosphate dehydratase (195 aa).

Belongs to the imidazoleglycerol-phosphate dehydratase family.

The protein localises to the cytoplasm. The enzyme catalyses D-erythro-1-(imidazol-4-yl)glycerol 3-phosphate = 3-(imidazol-4-yl)-2-oxopropyl phosphate + H2O. Its pathway is amino-acid biosynthesis; L-histidine biosynthesis; L-histidine from 5-phospho-alpha-D-ribose 1-diphosphate: step 6/9. The polypeptide is Imidazoleglycerol-phosphate dehydratase (Deinococcus deserti (strain DSM 17065 / CIP 109153 / LMG 22923 / VCD115)).